Consider the following 159-residue polypeptide: Large ribosomal subunit protein uL22 (159 aa).

This sequence belongs to the universal ribosomal protein uL22 family. Part of the 50S ribosomal subunit.

Functionally, this protein binds specifically to 23S rRNA; its binding is stimulated by other ribosomal proteins, e.g. L4, L17, and L20. It is important during the early stages of 50S assembly. It makes multiple contacts with different domains of the 23S rRNA in the assembled 50S subunit and ribosome. The globular domain of the protein is located near the polypeptide exit tunnel on the outside of the subunit, while an extended beta-hairpin is found that lines the wall of the exit tunnel in the center of the 70S ribosome. This chain is Large ribosomal subunit protein uL22, found in Thermotoga sp. (strain RQ2).